We begin with the raw amino-acid sequence, 642 residues long: 1-deoxy-D-xylulose-5-phosphate synthase (642 aa).

Thiamine diphosphate-binding positions include His-79 and Gly-120–Ser-122. Asp-151 contacts Mg(2+). Thiamine diphosphate is bound by residues Gly-152 to Ser-153, Asn-180, Tyr-290, and Glu-372. Mg(2+) is bound at residue Asn-180.

Belongs to the transketolase family. DXPS subfamily. In terms of assembly, homodimer. Mg(2+) is required as a cofactor. Requires thiamine diphosphate as cofactor.

It carries out the reaction D-glyceraldehyde 3-phosphate + pyruvate + H(+) = 1-deoxy-D-xylulose 5-phosphate + CO2. Its pathway is metabolic intermediate biosynthesis; 1-deoxy-D-xylulose 5-phosphate biosynthesis; 1-deoxy-D-xylulose 5-phosphate from D-glyceraldehyde 3-phosphate and pyruvate: step 1/1. Functionally, catalyzes the acyloin condensation reaction between C atoms 2 and 3 of pyruvate and glyceraldehyde 3-phosphate to yield 1-deoxy-D-xylulose-5-phosphate (DXP). The chain is 1-deoxy-D-xylulose-5-phosphate synthase from Rhodospirillum centenum (strain ATCC 51521 / SW).